Consider the following 341-residue polypeptide: Cell wall mannoprotein PIR1 (341 aa).

The first 18 residues, 1–18, serve as a signal peptide directing secretion; the sequence is MQYKKSLVASALVATSLA. Residues 19 to 63 constitute a propeptide that is removed on maturation; it reads AYAPKDPWSTLTPSATYKGGITDYSSTFGIAVEPIATTASSKAKR. 8 PIR1/2/3 repeats span residues 64 to 82, 83 to 101, 102 to 120, 126 to 144, 145 to 163, 164 to 182, 183 to 201, and 202 to 220; these read AAAISQIGDGQIQATTKTT, AAAVSQIGDGQIQATTKTK, AAAVSQIGDGQIQATTKTT, AAAVSQIGDGQIQATTNTT, and VAPVSQITDGQIQATTLTS.

This sequence belongs to the PIR protein family. In terms of processing, covalently linked to beta-1,3-glucan of the inner cell wall layer via an alkali-sensitive ester linkage between the gamma-carboxyl group of glutamic acids, arising from specific glutamines within the PIR1/2/3 repeats, and hydroxyl groups of glucoses of beta-1,3-glucan chains. O-glycosylated. Extensively O-mannosylated.

The protein resides in the secreted. Its subcellular location is the cell wall. Its function is as follows. Component of the outer cell wall layer. Required for stability of the cell wall and for optimal growth. Required for resistance against several antifungal and cell wall-perturbing agents and for tolerance to heat shock. This Saccharomyces cerevisiae (strain YJM789) (Baker's yeast) protein is Cell wall mannoprotein PIR1 (PIR1).